We begin with the raw amino-acid sequence, 206 residues long: Ras-related protein Ral-B (206 aa).

Residue 21–29 participates in GTP binding; it reads GSGGVGKSA. Positions 43-51 match the Effector region motif; that stretch reads YEPTKADSY. Residues 68–72, 128–131, and 158–160 each bind GTP; these read DTAGQ, NKSD, and SAK. Positions 181–206 are disordered; that stretch reads MSENKDKNGRKSSKSKKSFKERCCLL. A Cysteine methyl ester modification is found at C203. C203 carries S-geranylgeranyl cysteine lipidation. Residues 204-206 constitute a propeptide, removed in mature form; sequence CLL.

Belongs to the small GTPase superfamily. Ras family. As to quaternary structure, interacts with EXOC2/Sec5 and EXOC8/Exo84. Interacts (via effector domain) with RALBP1. In terms of processing, prenylation is essential for membrane localization. The farnesylated form confers resistance to the proapoptotic and anti-anchorage-dependent growth effects of some geranylgeranyltransferase I inhibitors.

It is found in the cell membrane. Its subcellular location is the midbody. The catalysed reaction is GTP + H2O = GDP + phosphate + H(+). Alternates between an inactive form bound to GDP and an active form bound to GTP. Activated by a guanine nucleotide-exchange factor (GEF) and inactivated by a GTPase-activating protein (GAP). Its function is as follows. Multifunctional GTPase involved in a variety of cellular processes including gene expression, cell migration, cell proliferation, oncogenic transformation and membrane trafficking. Accomplishes its multiple functions by interacting with distinct downstream effectors. Acts as a GTP sensor for GTP-dependent exocytosis of dense core vesicles. Required both to stabilize the assembly of the exocyst complex and to localize functional exocyst complexes to the leading edge of migrating cells. Required for suppression of apoptosis. In late stages of cytokinesis, upon completion of the bridge formation between dividing cells, mediates exocyst recruitment to the midbody to drive abscission. Involved in ligand-dependent receptor mediated endocytosis of the EGF and insulin receptors. The chain is Ras-related protein Ral-B (Ralb) from Mus musculus (Mouse).